Reading from the N-terminus, the 253-residue chain is tRNA uridine(34) hydroxylase (253 aa).

The region spanning 127–221 (HGRPLVLLDT…YFEDVGGEGY (95 aa)) is the Rhodanese domain. The Cysteine persulfide intermediate role is filled by Cys-181.

Belongs to the TrhO family.

The catalysed reaction is uridine(34) in tRNA + AH2 + O2 = 5-hydroxyuridine(34) in tRNA + A + H2O. Functionally, catalyzes oxygen-dependent 5-hydroxyuridine (ho5U) modification at position 34 in tRNAs. The sequence is that of tRNA uridine(34) hydroxylase from Xanthomonas campestris pv. campestris (strain 8004).